A 517-amino-acid polypeptide reads, in one-letter code: Acetylcholine receptor subunit delta (517 aa).

The signal sequence occupies residues 1 to 21 (MAGPVPTLGLLAALVVCGSWG). The Extracellular segment spans residues 22-245 (LNEEQRLIQH…VTFYLIIRRK (224 aa)). N-linked (GlcNAc...) asparagine glycosylation is found at Asn97, Asn164, and Asn190. A disulfide bridge connects residues Cys151 and Cys165. Transmembrane regions (helical) follow at residues 246-270 (PLFYIINILVPCVLISFMINLVFYL), 278-296 (TSVAISVLLAQSVFLLLIS), and 312-333 (FLLFGMVLVTMVVVICVIVLNI). Topologically, residues 334 to 471 (HFRTPSTHVL…WNQVARTVDR (138 aa)) are cytoplasmic. Tyr390 carries the phosphotyrosine; by Tyr-kinases modification. The chain crosses the membrane as a helical span at residues 472–490 (LCLFVVTPVMVVGTAWIFL).

Belongs to the ligand-gated ion channel (TC 1.A.9) family. Acetylcholine receptor (TC 1.A.9.1) subfamily. Delta/CHRND sub-subfamily. In terms of assembly, pentamer of two alpha chains, and one each of the beta, delta, and gamma (in immature muscle) or epsilon (in mature muscle) chains. The muscle heteropentamer composed of alpha-1, beta-1, delta, epsilon subunits interacts with the alpha-conotoxin ImII.

It localises to the postsynaptic cell membrane. It is found in the cell membrane. It carries out the reaction K(+)(in) = K(+)(out). The enzyme catalyses Na(+)(in) = Na(+)(out). After binding acetylcholine, the AChR responds by an extensive change in conformation that affects all subunits and leads to opening of an ion-conducting channel across the plasma membrane. The sequence is that of Acetylcholine receptor subunit delta (Chrnd) from Rattus norvegicus (Rat).